Consider the following 337-residue polypeptide: Putative NAC domain-containing protein 94 (337 aa).

One can recognise an NAC domain in the interval 20–191; it reads VLPGFRFHPT…AWAICRIFKK (172 aa).

Its subcellular location is the nucleus. The chain is Putative NAC domain-containing protein 94 (ANAC094) from Arabidopsis thaliana (Mouse-ear cress).